Reading from the N-terminus, the 263-residue chain is Small ribosomal subunit protein bS1c (263 aa).

S1 motif domains are found at residues 27 to 96, 114 to 178, and 192 to 260; these read GDIV…LSIR, DSLL…LSHR, and GNII…LSMK.

The protein belongs to the bacterial ribosomal protein bS1 family.

Its subcellular location is the plastid. It is found in the chloroplast. This chain is Small ribosomal subunit protein bS1c (rps1), found in Pyropia yezoensis (Susabi-nori).